We begin with the raw amino-acid sequence, 258 residues long: MGALGDSAYGARGRLIKFSYIVTALISILFSISCICYGIWLLARRSQYAELVSPSLYVDVGRILVIISILSILNYLICFYAIFKEMRCFVTSCAVASIVIAVMLIIGGCIGLNFRDQLTHYTPLNLKMLTSLRELYGTHDMKGITESWDALQSNFKCCGVNGTDNAQIWKTSKWYMHQRAPKLLIPESCCIPSEIERCRSNPFDQDAPPPYYTSTCYEPLQNDLLHVMNVASWLCITNAIVQIIPSVAGCWYSKLIRK.

The Cytoplasmic portion of the chain corresponds to 1–20; the sequence is MGALGDSAYGARGRLIKFSY. The helical transmembrane segment at 21–41 threads the bilayer; it reads IVTALISILFSISCICYGIWL. At 42-62 the chain is on the extracellular side; it reads LARRSQYAELVSPSLYVDVGR. A helical membrane pass occupies residues 63–83; it reads ILVIISILSILNYLICFYAIF. Residues 84–93 lie on the Cytoplasmic side of the membrane; sequence KEMRCFVTSC. The chain crosses the membrane as a helical span at residues 94–114; that stretch reads AVASIVIAVMLIIGGCIGLNF. At 115–223 the chain is on the extracellular side; sequence RDQLTHYTPL…STCYEPLQND (109 aa). A helical membrane pass occupies residues 224–244; sequence LLHVMNVASWLCITNAIVQII. Residues 245–258 lie on the Cytoplasmic side of the membrane; that stretch reads PSVAGCWYSKLIRK.

The protein belongs to the tetraspanin (TM4SF) family. In terms of assembly, interacts with doxa-1 and bli-3. As to expression, expressed in the body wall (hyp7 hypodermal syncitium), pharynx and vulva. Expressed in a punctate pattern along the thick region of the hypodermis.

The protein localises to the membrane. In terms of biological role, plays a role in cuticle biogenesis. In complex with doxa-1 and the dual oxidase bli-3, promotes the generation of reactive oxygen species (ROS) and tyrosine cross-linking of collagen, thus stabilizing cuticular extracellular matrix. The chain is Tetraspanin-15 from Caenorhabditis elegans.